The following is a 556-amino-acid chain: 2-succinyl-5-enolpyruvyl-6-hydroxy-3-cyclohexene-1-carboxylate synthase (556 aa).

This sequence belongs to the TPP enzyme family. MenD subfamily. Homodimer. It depends on Mg(2+) as a cofactor. The cofactor is Mn(2+). Thiamine diphosphate is required as a cofactor.

The catalysed reaction is isochorismate + 2-oxoglutarate + H(+) = 5-enolpyruvoyl-6-hydroxy-2-succinyl-cyclohex-3-ene-1-carboxylate + CO2. It participates in quinol/quinone metabolism; 1,4-dihydroxy-2-naphthoate biosynthesis; 1,4-dihydroxy-2-naphthoate from chorismate: step 2/7. It functions in the pathway quinol/quinone metabolism; menaquinone biosynthesis. Functionally, catalyzes the thiamine diphosphate-dependent decarboxylation of 2-oxoglutarate and the subsequent addition of the resulting succinic semialdehyde-thiamine pyrophosphate anion to isochorismate to yield 2-succinyl-5-enolpyruvyl-6-hydroxy-3-cyclohexene-1-carboxylate (SEPHCHC). This Escherichia coli (strain SMS-3-5 / SECEC) protein is 2-succinyl-5-enolpyruvyl-6-hydroxy-3-cyclohexene-1-carboxylate synthase.